We begin with the raw amino-acid sequence, 123 residues long: Large ribosomal subunit protein bL20 (123 aa).

The segment covering 1–15 (MARVKRSVNAKKKRR) has biased composition (basic residues). Positions 1 to 23 (MARVKRSVNAKKKRREVLDQASG) are disordered.

This sequence belongs to the bacterial ribosomal protein bL20 family.

Its function is as follows. Binds directly to 23S ribosomal RNA and is necessary for the in vitro assembly process of the 50S ribosomal subunit. It is not involved in the protein synthesizing functions of that subunit. The sequence is that of Large ribosomal subunit protein bL20 from Cutibacterium acnes (strain DSM 16379 / KPA171202) (Propionibacterium acnes).